The sequence spans 365 residues: Protein-glutamate methylesterase/protein-glutamine glutaminase 1 (365 aa).

Residues 4–121 enclose the Response regulatory domain; it reads KVLVVDDSQF…SRDSVVLKKR (118 aa). Position 55 is a 4-aspartylphosphate (D55). The disordered stretch occupies residues 138–173; it reads AARSTTQPSGVRPSALGANLSSSRSPRPASSAPSAP. Positions 158–172 are enriched in low complexity; it reads SSSRSPRPASSAPSA. A CheB-type methylesterase domain is found at 182–365; it reads KLVAIGASTG…QVWQRLVSDV (184 aa). Active-site residues include S189, H216, and D310.

Belongs to the CheB family. Post-translationally, phosphorylated by CheA. Phosphorylation of the N-terminal regulatory domain activates the methylesterase activity.

Its subcellular location is the cytoplasm. It carries out the reaction [protein]-L-glutamate 5-O-methyl ester + H2O = L-glutamyl-[protein] + methanol + H(+). The enzyme catalyses L-glutaminyl-[protein] + H2O = L-glutamyl-[protein] + NH4(+). Its function is as follows. Involved in chemotaxis. Part of a chemotaxis signal transduction system that modulates chemotaxis in response to various stimuli. Catalyzes the demethylation of specific methylglutamate residues introduced into the chemoreceptors (methyl-accepting chemotaxis proteins or MCP) by CheR. Also mediates the irreversible deamidation of specific glutamine residues to glutamic acid. This is Protein-glutamate methylesterase/protein-glutamine glutaminase 1 from Saccharophagus degradans (strain 2-40 / ATCC 43961 / DSM 17024).